The following is a 220-amino-acid chain: Cytidylate kinase (220 aa).

An ATP-binding site is contributed by 9–17 (GPAASGKST).

The protein belongs to the cytidylate kinase family. Type 1 subfamily.

The protein localises to the cytoplasm. It carries out the reaction CMP + ATP = CDP + ADP. The enzyme catalyses dCMP + ATP = dCDP + ADP. This Thermotoga petrophila (strain ATCC BAA-488 / DSM 13995 / JCM 10881 / RKU-1) protein is Cytidylate kinase.